Consider the following 669-residue polypeptide: NADH-ubiquinone oxidoreductase chain 5 (669 aa).

The next 15 membrane-spanning stretches (helical) occupy residues 3–23, 50–70, 81–100, 119–139, 178–198, 211–231, 253–273, 286–306, 322–342, 377–397, 423–443, 464–484, 522–542, 628–648, and 649–669; these read LLIV…GRFL, VALC…SELF, LTVI…HIYS, IFTF…LFLG, LALG…STIF, FLFC…VFIG, TPVS…FMIA, LIVI…TGIL, LGYM…FHLM, LLPF…GFPF, FWLG…LLFL, ILMA…GYLA, LIPI…NFVV, AFVM…WDFI, and SFWV…FINI.

The protein belongs to the complex I subunit 5 family.

The protein localises to the mitochondrion inner membrane. It carries out the reaction a ubiquinone + NADH + 5 H(+)(in) = a ubiquinol + NAD(+) + 4 H(+)(out). Functionally, core subunit of the mitochondrial membrane respiratory chain NADH dehydrogenase (Complex I) that is believed to belong to the minimal assembly required for catalysis. Complex I functions in the transfer of electrons from NADH to the respiratory chain. The immediate electron acceptor for the enzyme is believed to be ubiquinone. The protein is NADH-ubiquinone oxidoreductase chain 5 (ND5) of Marchantia polymorpha (Common liverwort).